The sequence spans 264 residues: 3-methyl-2-oxobutanoate hydroxymethyltransferase (264 aa).

Positions 45 and 84 each coordinate Mg(2+). Residues 45 to 46 (DS), D84, and K112 contribute to the 3-methyl-2-oxobutanoate site. A Mg(2+)-binding site is contributed by E114. E181 serves as the catalytic Proton acceptor.

Belongs to the PanB family. In terms of assembly, homodecamer; pentamer of dimers. Mg(2+) is required as a cofactor.

It localises to the cytoplasm. It carries out the reaction 3-methyl-2-oxobutanoate + (6R)-5,10-methylene-5,6,7,8-tetrahydrofolate + H2O = 2-dehydropantoate + (6S)-5,6,7,8-tetrahydrofolate. It participates in cofactor biosynthesis; (R)-pantothenate biosynthesis; (R)-pantoate from 3-methyl-2-oxobutanoate: step 1/2. In terms of biological role, catalyzes the reversible reaction in which hydroxymethyl group from 5,10-methylenetetrahydrofolate is transferred onto alpha-ketoisovalerate to form ketopantoate. This chain is 3-methyl-2-oxobutanoate hydroxymethyltransferase, found in Escherichia coli O81 (strain ED1a).